A 419-amino-acid polypeptide reads, in one-letter code: Innexin inx5 (419 aa).

Over 1-21 (MFSAVKPLSKYLQFKSIRIYD) the chain is Cytoplasmic. A helical membrane pass occupies residues 22-42 (SVFTIHSRCTVVILLTCSLLL). Over 43–162 (SARQYFGDPI…QTERQYLRYY (120 aa)) the chain is Extracellular. A helical membrane pass occupies residues 163–183 (QWVIILLLFQSFVFYFPSCLW). Residues 184-238 (KVWEGRRLKQLCSEVGDALLSEETYNTRLRMLVKYFTTDYEDMHFCYMAKYVFCE) lie on the Cytoplasmic side of the membrane. Residues 239 to 259 (VLNFLISVVNIIVLEVFLNGF) form a helical membrane-spanning segment. Over 260–320 (WSKYLRALAT…ILPLNILNEK (61 aa)) the chain is Extracellular. A helical transmembrane segment spans residues 321–341 (IFVFLWAWFLLMALMSGLNLL). Topologically, residues 342–419 (CRLAMICSRY…ASGSTLESPV (78 aa)) are cytoplasmic.

It belongs to the pannexin family. Expressed in the cortex of the pupal CNS and at low levels in the wing imaginal disk.

It is found in the cell membrane. The protein resides in the cell junction. It localises to the gap junction. Its function is as follows. Structural component of the gap junctions. The polypeptide is Innexin inx5 (Inx5) (Drosophila melanogaster (Fruit fly)).